The primary structure comprises 262 residues: Acyl-[acyl-carrier-protein]--UDP-N-acetylglucosamine O-acyltransferase (262 aa).

Belongs to the transferase hexapeptide repeat family. LpxA subfamily. In terms of assembly, homotrimer.

The protein localises to the cytoplasm. The enzyme catalyses a (3R)-hydroxyacyl-[ACP] + UDP-N-acetyl-alpha-D-glucosamine = a UDP-3-O-[(3R)-3-hydroxyacyl]-N-acetyl-alpha-D-glucosamine + holo-[ACP]. It participates in glycolipid biosynthesis; lipid IV(A) biosynthesis; lipid IV(A) from (3R)-3-hydroxytetradecanoyl-[acyl-carrier-protein] and UDP-N-acetyl-alpha-D-glucosamine: step 1/6. Its function is as follows. Involved in the biosynthesis of lipid A, a phosphorylated glycolipid that anchors the lipopolysaccharide to the outer membrane of the cell. This chain is Acyl-[acyl-carrier-protein]--UDP-N-acetylglucosamine O-acyltransferase, found in Shigella dysenteriae serotype 1 (strain Sd197).